Consider the following 295-residue polypeptide: Small ribosomal subunit protein uS2 (295 aa).

A disordered region spans residues 232-295 (RRRGTDEKPE…DEQPAAAAAE (64 aa)). A compositionally biased stretch (basic and acidic residues) spans 252 to 287 (EWERELLEEPKKSDEQPAKSDELPVKTDEQPTKSDE).

It belongs to the universal ribosomal protein uS2 family.

This is Small ribosomal subunit protein uS2 from Salinispora tropica (strain ATCC BAA-916 / DSM 44818 / JCM 13857 / NBRC 105044 / CNB-440).